The primary structure comprises 418 residues: Putative F-box protein At1g20795 (418 aa).

In terms of domain architecture, F-box spans 1 to 46; that stretch reads METLGLPLPLFEKILFRLDPISLVMMKCTRRSFNSHISEDPYFKSK.

The chain is Putative F-box protein At1g20795 from Arabidopsis thaliana (Mouse-ear cress).